A 159-amino-acid chain; its full sequence is Putative ribosomal RNA large subunit methyltransferase H (159 aa).

S-adenosyl-L-methionine is bound by residues leucine 76, glycine 108, and 127-132 (LSAMTF).

It belongs to the RNA methyltransferase RlmH family.

It is found in the cytoplasm. It catalyses the reaction pseudouridine(1915) in 23S rRNA + S-adenosyl-L-methionine = N(3)-methylpseudouridine(1915) in 23S rRNA + S-adenosyl-L-homocysteine + H(+). Functionally, specifically methylates the pseudouridine at position 1915 (m3Psi1915) in 23S rRNA. This chain is Putative ribosomal RNA large subunit methyltransferase H, found in Methanospirillum hungatei JF-1 (strain ATCC 27890 / DSM 864 / NBRC 100397 / JF-1).